The chain runs to 478 residues: NADH-quinone oxidoreductase subunit N (478 aa).

13 helical membrane passes run serine 7–alanine 27, isoleucine 46–phenylalanine 66, alanine 74–serine 94, phenylalanine 109–isoleucine 129, phenylalanine 163–alanine 183, valine 204–valine 224, alanine 237–leucine 257, glutamine 273–valine 293, leucine 300–asparagine 320, methionine 328–leucine 348, leucine 371–phenylalanine 391, glycine 405–leucine 425, and tryptophan 451–isoleucine 471.

This sequence belongs to the complex I subunit 2 family. In terms of assembly, NDH-1 is composed of 14 different subunits. Subunits NuoA, H, J, K, L, M, N constitute the membrane sector of the complex.

Its subcellular location is the cell inner membrane. It catalyses the reaction a quinone + NADH + 5 H(+)(in) = a quinol + NAD(+) + 4 H(+)(out). Its function is as follows. NDH-1 shuttles electrons from NADH, via FMN and iron-sulfur (Fe-S) centers, to quinones in the respiratory chain. The immediate electron acceptor for the enzyme in this species is believed to be ubiquinone. Couples the redox reaction to proton translocation (for every two electrons transferred, four hydrogen ions are translocated across the cytoplasmic membrane), and thus conserves the redox energy in a proton gradient. The protein is NADH-quinone oxidoreductase subunit N of Hydrogenovibrio crunogenus (strain DSM 25203 / XCL-2) (Thiomicrospira crunogena).